The primary structure comprises 532 residues: CTP synthase (532 aa).

An amidoligase domain region spans residues 1–267; sequence MTKFIFVTGG…DDIVLKILGL (267 aa). Position 13 (Ser13) interacts with CTP. Ser13 provides a ligand contact to UTP. 14–19 lines the ATP pocket; it reads SLGKGI. An L-glutamine-binding site is contributed by Tyr54. Asp71 is a binding site for ATP. Mg(2+) is bound by residues Asp71 and Glu141. Residues 148-150, 188-193, and Lys224 each bind CTP; these read DIE and KTKPTQ. Residues 188-193 and Lys224 each bind UTP; that span reads KTKPTQ. The Glutamine amidotransferase type-1 domain maps to 292-532; it reads EIAIVGKYVE…EFVKATLANR (241 aa). Gly354 provides a ligand contact to L-glutamine. Residue Cys381 is the Nucleophile; for glutamine hydrolysis of the active site. Residues 382–385, Glu405, and Arg462 each bind L-glutamine; that span reads LGMQ. Residues His507 and Glu509 contribute to the active site.

Belongs to the CTP synthase family. In terms of assembly, homotetramer.

The enzyme catalyses UTP + L-glutamine + ATP + H2O = CTP + L-glutamate + ADP + phosphate + 2 H(+). The catalysed reaction is L-glutamine + H2O = L-glutamate + NH4(+). It catalyses the reaction UTP + NH4(+) + ATP = CTP + ADP + phosphate + 2 H(+). The protein operates within pyrimidine metabolism; CTP biosynthesis via de novo pathway; CTP from UDP: step 2/2. Its activity is regulated as follows. Allosterically activated by GTP, when glutamine is the substrate; GTP has no effect on the reaction when ammonia is the substrate. The allosteric effector GTP functions by stabilizing the protein conformation that binds the tetrahedral intermediate(s) formed during glutamine hydrolysis. Inhibited by the product CTP, via allosteric rather than competitive inhibition. In terms of biological role, catalyzes the ATP-dependent amination of UTP to CTP with either L-glutamine or ammonia as the source of nitrogen. Regulates intracellular CTP levels through interactions with the four ribonucleotide triphosphates. In Desulfitobacterium hafniense (strain Y51), this protein is CTP synthase.